We begin with the raw amino-acid sequence, 391 residues long: MVASSFQHHLEPMLTQPIPCQICTYQSHGVNFNVMTCRACAAFFRRSLVCGMRYHCKTRKNDCRIDSTERHFCRLCRFQKCLQMGMKAEKIQQNRDPISSTFPGTSTEPELSEIVDPENEKSYIFHGTLYGFKSLLAEVRYIFSISRNYSDSPLTDLENGFKLITRHQKRRYIDIEDRINFQNLTDFRLGHIKNCATWLTHSSFFQSLTETENLLILKSTWHVWSWLELLSVSVEIFGNQVCEEKIVFLSEKIAVDIVKVFRYILKPLNKQEKRKVEKELNPIFHILFDDVARKLQNLKPSSLEINYMLWQLVWFVAEKVLNEDNLRHGEQYTNQLASDLHNHYKNDLHLEQYAQRVLKMMAIVKSLQKHLMNIHKIIDYADNFCNLFAMK.

The nuclear receptor DNA-binding region spans 17-93; sequence PIPCQICTYQ…MGMKAEKIQQ (77 aa). 2 consecutive NR C4-type zinc fingers follow at residues 20 to 40 and 56 to 76; these read CQIC…CRAC and CKTR…CRLC. One can recognise an NR LBD domain in the interval 146-391; sequence SRNYSDSPLT…DNFCNLFAMK (246 aa).

This sequence belongs to the nuclear hormone receptor family.

It is found in the nucleus. Functionally, orphan nuclear receptor. The sequence is that of Nuclear hormone receptor family member nhr-218 (nhr-218) from Caenorhabditis elegans.